We begin with the raw amino-acid sequence, 458 residues long: Glycine--tRNA ligase (458 aa).

Residues arginine 97 and glutamate 171 each coordinate substrate. Residues 203 to 205 (RNE), 213 to 218 (FRTREF), 287 to 288 (EL), and 331 to 334 (GADR) contribute to the ATP site. 218-222 (FEQME) serves as a coordination point for substrate. 327-331 (EPSLG) contacts substrate.

The protein belongs to the class-II aminoacyl-tRNA synthetase family. As to quaternary structure, homodimer.

The protein resides in the cytoplasm. The enzyme catalyses tRNA(Gly) + glycine + ATP = glycyl-tRNA(Gly) + AMP + diphosphate. Its function is as follows. Catalyzes the attachment of glycine to tRNA(Gly). In Bacillus thuringiensis subsp. konkukian (strain 97-27), this protein is Glycine--tRNA ligase.